Consider the following 68-residue polypeptide: Protein transport protein Sec61 subunit gamma (68 aa).

Residues 1-32 are Cytoplasmic-facing; that stretch reads MDQVMAWVEPGKQFAKDSIRLVKRCTKPDRKE. Residues 33 to 61 form a helical membrane-spanning segment; the sequence is FQKIAVATAIGFAIMGFIGFFVKLIHIPI. Residues 62–68 are Extracellular-facing; the sequence is NNIIVGS.

This sequence belongs to the SecE/SEC61-gamma family. In terms of assembly, heterotrimeric complex composed of SEC61-alpha, SEC61-beta and SEC61-gamma. Component of the ribosome-associated ER translocon complex.

It is found in the endoplasmic reticulum membrane. Necessary for protein translocation in the endoplasmic reticulum and multi-pass membrane protein biogenesis. The polypeptide is Protein transport protein Sec61 subunit gamma (SEC61G) (Ciona intestinalis (Transparent sea squirt)).